Here is a 642-residue protein sequence, read N- to C-terminus: Serine/threonine-protein kinase pakA (642 aa).

Composition is skewed to polar residues over residues 1–12 (MSLKKQQQQSDF) and 38–48 (LRQSASFTALN). The interval 1-82 (MSLKKQQQQS…GFGTKPRRKN (82 aa)) is disordered. One can recognise a CRIB domain in the interval 100 to 113 (ISAPENPVHVTHVG). 2 disordered regions span residues 180–276 (GEYP…PIPE) and 317–338 (QLDRSRSQPAAAVARPRPRTRQ). 2 stretches are compositionally biased toward low complexity: residues 217–227 (SQSSPVPVLSS) and 254–266 (VVSNRAPAARPAN). The 252-residue stretch at 361 to 612 (YYNLNKIGQG…AHDLLKHPFM (252 aa)) folds into the Protein kinase domain. ATP is bound by residues 367 to 375 (IGQGASGGV) and Lys390. Asp480 functions as the Proton acceptor in the catalytic mechanism.

Belongs to the protein kinase superfamily. STE Ser/Thr protein kinase family. STE20 subfamily.

It is found in the cytoplasm. The protein resides in the nucleus. It catalyses the reaction L-seryl-[protein] + ATP = O-phospho-L-seryl-[protein] + ADP + H(+). It carries out the reaction L-threonyl-[protein] + ATP = O-phospho-L-threonyl-[protein] + ADP + H(+). Its function is as follows. MAP4K component of the MAPK pathway required for the mating pheromone response and the regulation of cell polarity and cell cycle. This Talaromyces marneffei (Penicillium marneffei) protein is Serine/threonine-protein kinase pakA (pakA).